Consider the following 343-residue polypeptide: MLQTYLQSIMNQSHLTYDEVESVTNLMLNGADPHQIAAFLAVLKYRGETPTEVAGMISALQKQATPVNLPFPALDIVGTGGDLANTVNISTGSAILAAACGIPIAKHGNRSVSSQSGSADVLEALGIEIEMSPEELLSCVQEVGIGFMFAPIYHPSLKKLAPIRKGMKFPSVFNILGPLLNPANTEYALIGVSNEPILELMSEVCLKFKNTKRTFLFHGSGLDELTTLGKVVGYDIQQGKKTRLEIDPTSLGFNSCKIEDLKGGNSKLNACILKKAFMGQQSAIADALIFNAGAAMWVFGNAATLEEGIHSARKTLMEGEALRVLAQWAAFSQQLKLKRGSCN.

5-phospho-alpha-D-ribose 1-diphosphate is bound by residues glycine 78, 81-82 (GD), threonine 86, 88-91 (NIST), 106-114 (KHGNRSVSS), and serine 118. Position 78 (glycine 78) interacts with anthranilate. Serine 90 is a Mg(2+) binding site. Asparagine 109 provides a ligand contact to anthranilate. Residue arginine 164 participates in anthranilate binding. Mg(2+) is bound by residues aspartate 223 and glutamate 224.

It belongs to the anthranilate phosphoribosyltransferase family. Homodimer. Mg(2+) is required as a cofactor.

The catalysed reaction is N-(5-phospho-beta-D-ribosyl)anthranilate + diphosphate = 5-phospho-alpha-D-ribose 1-diphosphate + anthranilate. The protein operates within amino-acid biosynthesis; L-tryptophan biosynthesis; L-tryptophan from chorismate: step 2/5. Functionally, catalyzes the transfer of the phosphoribosyl group of 5-phosphorylribose-1-pyrophosphate (PRPP) to anthranilate to yield N-(5'-phosphoribosyl)-anthranilate (PRA). In Chlamydia caviae (strain ATCC VR-813 / DSM 19441 / 03DC25 / GPIC) (Chlamydophila caviae), this protein is Anthranilate phosphoribosyltransferase.